Reading from the N-terminus, the 307-residue chain is Transcription initiation factor IIB (307 aa).

2 repeat units span residues 123 to 206 (NELE…LREL) and 217 to 298 (DYVT…ELTQ).

Belongs to the TFIIB family.

Functionally, stabilizes TBP binding to an archaeal box-A promoter. Also responsible for recruiting RNA polymerase II to the pre-initiation complex (DNA-TBP-TFIIB). This is Transcription initiation factor IIB from Sulfolobus acidocaldarius (strain ATCC 33909 / DSM 639 / JCM 8929 / NBRC 15157 / NCIMB 11770).